We begin with the raw amino-acid sequence, 428 residues long: Serine--tRNA ligase (428 aa).

L-serine is bound at residue 235–237 (TAE). 266–268 (RSE) contributes to the ATP binding site. L-serine is bound at residue E289. 353–356 (EISS) serves as a coordination point for ATP. S389 contributes to the L-serine binding site.

This sequence belongs to the class-II aminoacyl-tRNA synthetase family. Type-1 seryl-tRNA synthetase subfamily. As to quaternary structure, homodimer. The tRNA molecule binds across the dimer.

It is found in the cytoplasm. It catalyses the reaction tRNA(Ser) + L-serine + ATP = L-seryl-tRNA(Ser) + AMP + diphosphate + H(+). The catalysed reaction is tRNA(Sec) + L-serine + ATP = L-seryl-tRNA(Sec) + AMP + diphosphate + H(+). It functions in the pathway aminoacyl-tRNA biosynthesis; selenocysteinyl-tRNA(Sec) biosynthesis; L-seryl-tRNA(Sec) from L-serine and tRNA(Sec): step 1/1. Catalyzes the attachment of serine to tRNA(Ser). Is also able to aminoacylate tRNA(Sec) with serine, to form the misacylated tRNA L-seryl-tRNA(Sec), which will be further converted into selenocysteinyl-tRNA(Sec). The sequence is that of Serine--tRNA ligase from Shewanella halifaxensis (strain HAW-EB4).